The sequence spans 155 residues: Small ribosomal subunit protein uS7cz/uS7cy (155 aa).

This sequence belongs to the universal ribosomal protein uS7 family. In terms of assembly, part of the 30S ribosomal subunit.

Its subcellular location is the plastid. The protein localises to the chloroplast. One of the primary rRNA binding proteins, it binds directly to 16S rRNA where it nucleates assembly of the head domain of the 30S subunit. The polypeptide is Small ribosomal subunit protein uS7cz/uS7cy (rps7-A) (Cucumis sativus (Cucumber)).